The primary structure comprises 89 residues: Small ribosomal subunit protein uS15 (89 aa).

Belongs to the universal ribosomal protein uS15 family. As to quaternary structure, part of the 30S ribosomal subunit. Forms a bridge to the 50S subunit in the 70S ribosome, contacting the 23S rRNA.

Functionally, one of the primary rRNA binding proteins, it binds directly to 16S rRNA where it helps nucleate assembly of the platform of the 30S subunit by binding and bridging several RNA helices of the 16S rRNA. Forms an intersubunit bridge (bridge B4) with the 23S rRNA of the 50S subunit in the ribosome. This is Small ribosomal subunit protein uS15 from Bifidobacterium adolescentis (strain ATCC 15703 / DSM 20083 / NCTC 11814 / E194a).